Reading from the N-terminus, the 105-residue chain is Heme oxygenase (mycobilin-producing) (105 aa).

The 90-residue stretch at 3-92 (VVKINAIEVP…VATGASLLEF (90 aa)) folds into the ABM domain. Residues 22–26 (RFAHR), His-75, and 83–86 (VATG) each bind heme.

Belongs to the antibiotic biosynthesis monooxygenase family. In terms of assembly, homodimer.

The enzyme catalyses heme b + 3 AH2 + 3 O2 + 2 H(+) = mycobilin a + Fe(2+) + 3 A + 3 H2O. It catalyses the reaction heme b + 3 AH2 + 3 O2 + 2 H(+) = mycobilin b + Fe(2+) + 3 A + 3 H2O. Its function is as follows. Catalyzes the oxidative degradation of the heme macrocyclic porphyrin ring in the presence of a suitable electron donor such as ascorbate or NADPH--cytochrome P450 reductase, with subsequent release of free iron. This chain is Heme oxygenase (mycobilin-producing) (mhuD), found in Mycobacterium tuberculosis (strain CDC 1551 / Oshkosh).